The sequence spans 374 residues: MSETLNLLKQLIERPSITPNDAGCQTILIDRLKSVGFQCEHLPFGEVHNFWAWHGHQSPFIIFAGHTDVVPPGDETQWHSPPFTPTEKNGYIYGRGAADMKSGLAAMVVAAENFVKQNPDHNGTIGFIVTSDEEGPAENGTQKVVDYLQQKNIKLDYCIVGEASSNEKLGDAIKIGRRGSMHGELTIIGKQGHIAYPHLADNPIHRSFQAFEALAKTKWDEGNEHFTPTSFQFYNVEAGAGAANVIPATLKAKFNFRFAPIHTTQQLQQKVERILNYYQLNYDIQWNVSSQPFFSGNGRLATFVRQAIQEICHLNTEPNTYGGTSDGRFIATTGCEVIELGPVNKTAHHVNENICIADLEKLTDIYFRTLQLLI.

Zn(2+) is bound at residue histidine 66. The active site involves aspartate 68. Aspartate 99 is a binding site for Zn(2+). The Proton acceptor role is filled by glutamate 133. Zn(2+) contacts are provided by glutamate 134, glutamate 162, and histidine 348.

It belongs to the peptidase M20A family. DapE subfamily. As to quaternary structure, homodimer. It depends on Zn(2+) as a cofactor. Requires Co(2+) as cofactor.

It carries out the reaction N-succinyl-(2S,6S)-2,6-diaminopimelate + H2O = (2S,6S)-2,6-diaminopimelate + succinate. It participates in amino-acid biosynthesis; L-lysine biosynthesis via DAP pathway; LL-2,6-diaminopimelate from (S)-tetrahydrodipicolinate (succinylase route): step 3/3. Functionally, catalyzes the hydrolysis of N-succinyl-L,L-diaminopimelic acid (SDAP), forming succinate and LL-2,6-diaminopimelate (DAP), an intermediate involved in the bacterial biosynthesis of lysine and meso-diaminopimelic acid, an essential component of bacterial cell walls. The protein is Succinyl-diaminopimelate desuccinylase of Coxiella burnetii (strain RSA 331 / Henzerling II).